The following is a 429-amino-acid chain: 3-phosphoshikimate 1-carboxyvinyltransferase (429 aa).

3-phosphoshikimate is bound by residues lysine 23, serine 24, and arginine 28. Phosphoenolpyruvate is bound at residue lysine 23. The phosphoenolpyruvate site is built by glycine 95 and arginine 123. Residues serine 168, glutamine 170, aspartate 316, and lysine 343 each coordinate 3-phosphoshikimate. Phosphoenolpyruvate is bound at residue glutamine 170. Residue aspartate 316 is the Proton acceptor of the active site. Arginine 347 and arginine 389 together coordinate phosphoenolpyruvate.

It belongs to the EPSP synthase family. As to quaternary structure, monomer.

It localises to the cytoplasm. The catalysed reaction is 3-phosphoshikimate + phosphoenolpyruvate = 5-O-(1-carboxyvinyl)-3-phosphoshikimate + phosphate. It participates in metabolic intermediate biosynthesis; chorismate biosynthesis; chorismate from D-erythrose 4-phosphate and phosphoenolpyruvate: step 6/7. Functionally, catalyzes the transfer of the enolpyruvyl moiety of phosphoenolpyruvate (PEP) to the 5-hydroxyl of shikimate-3-phosphate (S3P) to produce enolpyruvyl shikimate-3-phosphate and inorganic phosphate. This chain is 3-phosphoshikimate 1-carboxyvinyltransferase, found in Bacillus thuringiensis subsp. konkukian (strain 97-27).